The chain runs to 216 residues: Purine nucleoside phosphorylase DeoD-type (216 aa).

Residues Arg4, Arg23, and 67 to 70 (RVGT) each bind phosphate. A purine D-ribonucleoside is bound by residues 159 to 161 (EME) and 183 to 184 (SD). Asp184 serves as the catalytic Proton donor.

The protein belongs to the PNP/UDP phosphorylase family. Homohexamer; trimer of homodimers.

It carries out the reaction a purine D-ribonucleoside + phosphate = a purine nucleobase + alpha-D-ribose 1-phosphate. The enzyme catalyses a purine 2'-deoxy-D-ribonucleoside + phosphate = a purine nucleobase + 2-deoxy-alpha-D-ribose 1-phosphate. Its function is as follows. Catalyzes the reversible phosphorolytic breakdown of the N-glycosidic bond in the beta-(deoxy)ribonucleoside molecules, with the formation of the corresponding free purine bases and pentose-1-phosphate. The polypeptide is Purine nucleoside phosphorylase DeoD-type (Streptococcus thermophilus).